Here is a 1032-residue protein sequence, read N- to C-terminus: Vacuolar membrane protease (1032 aa).

Over 1-11 the chain is Cytoplasmic; sequence MRFQNPFAFRP. The helical transmembrane segment at 12–32 threads the bilayer; it reads GPVSFWTTVIYLALVIPLIYV. Topologically, residues 33–426 are vacuolar; the sequence is HETVPPAPSD…AWAVFALRGL (394 aa). N50 and N142 each carry an N-linked (GlcNAc...) asparagine glycan. Zn(2+)-binding residues include H207 and D219. Catalysis depends on E253, which acts as the Proton acceptor. Residues E254, E279, and H352 each coordinate Zn(2+). The chain crosses the membrane as a helical span at residues 427–447; that stretch reads FAWSLTLLVATPLILVAITYI. The Cytoplasmic portion of the chain corresponds to 448–482; the sequence is LARKDKYYFFSRDIKMHHDINDDPVVLGGWKGFLR. The chain crosses the membrane as a helical span at residues 483 to 503; it reads FPFALVFAGALTIASTLLLAK. The Vacuolar portion of the chain corresponds to 504 to 511; it reads FNPLIIYS. Residues 512–532 form a helical membrane-spanning segment; sequence SPYAVWSMTLSIFYFSFWLIM. At 533 to 545 the chain is on the cytoplasmic side; sequence RGASFIRPSALHR. Residues 546 to 566 traverse the membrane as a helical segment; that stretch reads GYVLIWLFALGWGLQVVGAVA. The Vacuolar portion of the chain corresponds to 567 to 573; the sequence is EDRLHIA. A helical membrane pass occupies residues 574-594; the sequence is ALYATVFLQSAVFLALFISLL. At 595–708 the chain is on the cytoplasmic side; that stretch reads EQFALLGKHD…WSGRLPSWTW (114 aa). Over residues 616-631 the composition is skewed to basic and acidic residues; the sequence is RDISSHGTDHESRPQP. Residues 616–666 are disordered; the sequence is RDISSHGTDHESRPQPEEEPAQPEGDEDESEDATETTPLRANEPGYGSSTR. Acidic residues predominate over residues 632 to 649; it reads EEEPAQPEGDEDESEDAT. Residues 709–729 traverse the membrane as a helical segment; the sequence is IIQFLLLAPVPVILFGNLGLV. The Vacuolar portion of the chain corresponds to 730–745; it reads AMSALQMTGTDGGSLL. A helical transmembrane segment spans residues 746 to 766; it reads VPVLTLGIVSIFLLLPLTPFI. Residues 767 to 773 lie on the Cytoplasmic side of the membrane; sequence HRVSHHV. A helical transmembrane segment spans residues 774–794; the sequence is PMFLLCVFAGTFIYNLVAFPF. The Vacuolar portion of the chain corresponds to 795–1032; the sequence is SDSHRFKFYF…LVEVRKTYKV (238 aa). Residues N812 and N884 are each glycosylated (N-linked (GlcNAc...) asparagine).

The protein belongs to the peptidase M28 family. Zn(2+) serves as cofactor.

It is found in the vacuole membrane. Its function is as follows. May be involved in vacuolar sorting and osmoregulation. The sequence is that of Vacuolar membrane protease from Fusarium vanettenii (strain ATCC MYA-4622 / CBS 123669 / FGSC 9596 / NRRL 45880 / 77-13-4) (Fusarium solani subsp. pisi).